The primary structure comprises 289 residues: CRISPR-associated endoribonuclease Cas6 2 (289 aa).

Belongs to the CRISPR-associated endoribonuclease Cas6 family. In terms of assembly, possibly part of the aCascade ribonucleoprotein complex. The cofactor is Mg(2+).

CRISPR (clustered regularly interspaced short palindromic repeat) is an adaptive immune system that provides protection against mobile genetic elements (viruses, transposable elements and conjugative plasmids). CRISPR clusters contain sequences complementary to antecedent mobile elements and target invading nucleic acids. CRISPR clusters are transcribed and processed into CRISPR RNA (crRNA). Functions as a ssRNA-specific endoribonuclease, generating an 8 base-long tag known as the 5' handle. The sequence is that of CRISPR-associated endoribonuclease Cas6 2 (cas6b) from Saccharolobus solfataricus (strain ATCC 35092 / DSM 1617 / JCM 11322 / P2) (Sulfolobus solfataricus).